The chain runs to 420 residues: Tyrosine--tRNA ligase (420 aa).

Y38 contributes to the L-tyrosine binding site. Residues 43 to 52 (PTGDSLHIGH) carry the 'HIGH' region motif. L-tyrosine-binding residues include Y169 and Q173. Residues 231–235 (KFGKS) carry the 'KMSKS' region motif. K234 provides a ligand contact to ATP. Residues 353 to 419 (KNLVDFLVDT…GKRKYTLVTI (67 aa)) form the S4 RNA-binding domain.

Belongs to the class-I aminoacyl-tRNA synthetase family. TyrS type 1 subfamily. In terms of assembly, homodimer.

The protein localises to the cytoplasm. It catalyses the reaction tRNA(Tyr) + L-tyrosine + ATP = L-tyrosyl-tRNA(Tyr) + AMP + diphosphate + H(+). Catalyzes the attachment of tyrosine to tRNA(Tyr) in a two-step reaction: tyrosine is first activated by ATP to form Tyr-AMP and then transferred to the acceptor end of tRNA(Tyr). This is Tyrosine--tRNA ligase from Lactobacillus helveticus (strain DPC 4571).